The sequence spans 444 residues: ATP-dependent protease ATPase subunit HslU (444 aa).

ATP contacts are provided by residues Ile20 and 62–67 (GVGKTE). Residues 130–158 (EDRILDALVPPPRGASGEPERGEDNSARQ) form a disordered region. Asp257, Glu322, and Arg394 together coordinate ATP.

It belongs to the ClpX chaperone family. HslU subfamily. A double ring-shaped homohexamer of HslV is capped on each side by a ring-shaped HslU homohexamer. The assembly of the HslU/HslV complex is dependent on binding of ATP.

It localises to the cytoplasm. In terms of biological role, ATPase subunit of a proteasome-like degradation complex; this subunit has chaperone activity. The binding of ATP and its subsequent hydrolysis by HslU are essential for unfolding of protein substrates subsequently hydrolyzed by HslV. HslU recognizes the N-terminal part of its protein substrates and unfolds these before they are guided to HslV for hydrolysis. The protein is ATP-dependent protease ATPase subunit HslU of Bordetella parapertussis (strain 12822 / ATCC BAA-587 / NCTC 13253).